We begin with the raw amino-acid sequence, 247 residues long: CDP-diacylglycerol pyrophosphatase (247 aa).

Residues 5 to 22 (IVLALVVSVAVAGGWLWM) form a helical membrane-spanning segment.

The protein belongs to the Cdh family.

Its subcellular location is the cell inner membrane. It catalyses the reaction a CDP-1,2-diacyl-sn-glycerol + H2O = a 1,2-diacyl-sn-glycero-3-phosphate + CMP + 2 H(+). It participates in phospholipid metabolism; CDP-diacylglycerol degradation; phosphatidate from CDP-diacylglycerol: step 1/1. The sequence is that of CDP-diacylglycerol pyrophosphatase from Enterobacter sp. (strain 638).